The following is a 257-amino-acid chain: Probable enoyl-CoA hydratase echA17 (257 aa).

This sequence belongs to the enoyl-CoA hydratase/isomerase family.

The enzyme catalyses a (3S)-3-hydroxyacyl-CoA = a (2E)-enoyl-CoA + H2O. It catalyses the reaction a 4-saturated-(3S)-3-hydroxyacyl-CoA = a (3E)-enoyl-CoA + H2O. In terms of biological role, could possibly oxidize fatty acids using specific components. The protein is Probable enoyl-CoA hydratase echA17 (echA17) of Mycolicibacterium paratuberculosis (strain ATCC BAA-968 / K-10) (Mycobacterium paratuberculosis).